Reading from the N-terminus, the 191-residue chain is MAFRMSEQPRTIKIYNLLAGTNEFIGEGDAYIPPHTGLPANSTDIAPPDIPAGFVAVFNSDESSWHLVEDHRGKTVYDVASGNALFISELGPLPENVTWLSPEGEFQKWNGTAWVKDTEAEKLFRIREAEETKNNLMQVASEHIAPLQDAADLEIATEEEISLLEAWKKYRVLLNRVDTSTAQDIEWPALP.

It belongs to the tfa family.

The sequence is that of Prophage tail fiber assembly protein homolog TfaR (tfaR) from Escherichia coli (strain K12).